We begin with the raw amino-acid sequence, 421 residues long: UDP-N-acetylglucosamine 1-carboxyvinyltransferase (421 aa).

22-23 (KN) provides a ligand contact to phosphoenolpyruvate. Residue Arg93 coordinates UDP-N-acetyl-alpha-D-glucosamine. The Proton donor role is filled by Cys117. Cys117 is modified (2-(S-cysteinyl)pyruvic acid O-phosphothioketal). UDP-N-acetyl-alpha-D-glucosamine-binding positions include 122–126 (RPVDL), Asp308, and Val330.

This sequence belongs to the EPSP synthase family. MurA subfamily.

The protein localises to the cytoplasm. It carries out the reaction phosphoenolpyruvate + UDP-N-acetyl-alpha-D-glucosamine = UDP-N-acetyl-3-O-(1-carboxyvinyl)-alpha-D-glucosamine + phosphate. Its pathway is cell wall biogenesis; peptidoglycan biosynthesis. Its function is as follows. Cell wall formation. Adds enolpyruvyl to UDP-N-acetylglucosamine. The sequence is that of UDP-N-acetylglucosamine 1-carboxyvinyltransferase from Pseudomonas paraeruginosa (strain DSM 24068 / PA7) (Pseudomonas aeruginosa (strain PA7)).